The chain runs to 392 residues: L-rhamnonate dehydratase (392 aa).

Substrate-binding residues include His-22 and Arg-48. Positions 214, 240, and 268 each coordinate Mg(2+). The active-site Proton acceptor is His-318. Position 338 (Glu-338) interacts with substrate.

The protein belongs to the mandelate racemase/muconate lactonizing enzyme family. RhamD subfamily. As to quaternary structure, homooctamer; tetramer of dimers. Mg(2+) serves as cofactor.

The catalysed reaction is L-rhamnonate = 2-dehydro-3-deoxy-L-rhamnonate + H2O. Functionally, catalyzes the dehydration of L-rhamnonate to 2-keto-3-deoxy-L-rhamnonate (KDR). This Paraburkholderia phytofirmans (strain DSM 17436 / LMG 22146 / PsJN) (Burkholderia phytofirmans) protein is L-rhamnonate dehydratase.